A 757-amino-acid polypeptide reads, in one-letter code: MYRRSYVFQTRKEQYERAEEAPRAAEPDRLAEARAAAPNLAALQGLGERVAAHVQRARALEQRHAVLRRQLDAFQRLDELAGPEDALARHVEGNRQRARDLAAERTRLERQGAEAQRALDEFRSKYENECECQLLLKEMLERLNKEADEALLRNLRLQIEAQFLQDDISAAKDRYKKNLLEIQTYVTILQQIIQTTPQAAAITSGMREEKLLTEREAAALQCQLEDGREMICLLQAQRTELQAQTAALEQAIRDAHECYDDEIQLYNEQIDTLRKEIEEAERSLERSSYDCRQLVVVQQTLRNELDRYHRIIENEGNRLSSAFIETPITLYTASHGASLSPRHGGKDLTRAVQDITAAKPRLKGLPKNLPRKKEMVAKDRADEILEETLLRGPEDMKPGRVVIKEEGESKLEPGDEEASPPTQEGAPEDVPDGGKISKAFEKLGKMIKEKVKGPKEPEPPADLYTKGRYVMVSGDGSFVDPGFCVFSVPAKGGVVVSKGDDSVPPDSGVEPSPQQPEPPLEEGQGPPQEKEDGLKEEGGPPEGKGEPPEGKGDSVKEEGGPPEGKGDGVKEEGGPPEGKGDGVKEEGGPPEGKGDGVKKEGEPPEGKGEGLKEEEGPLQKKEDGRPPTPHPADKGDEKNAKELKGLQGKQDDQKEEGARGPCPMVAPGPEGPSTPRSQGPQVILGGSEGHGARSGSRLARSPPRKLAYEKVEVMESIEKFSTESIQTYEETAVIVETMIEKTKANKKKLGEKGSSSA.

Residues 1–39 (MYRRSYVFQTRKEQYERAEEAPRAAEPDRLAEARAAAPN) are head. Ser-5 carries the phosphoserine modification. The IF rod domain occupies 39–319 (NLAALQGLGE…RIIENEGNRL (281 aa)). The segment at 40-74 (LAALQGLGERVAAHVQRARALEQRHAVLRRQLDAF) is coil 1A. Position 41 is an N-acetylalanine (Ala-41). A linker 1 region spans residues 75–83 (QRLDELAGP). Residues 84–183 (EDALARHVEG…RYKKNLLEIQ (100 aa)) form a coil 1B region. The linker 12 stretch occupies residues 184-200 (TYVTILQQIIQTTPQAA). Residues 201-319 (AITSGMREEK…RIIENEGNRL (119 aa)) are coil 2. The tail stretch occupies residues 320–756 (SSAFIETPIT…KKLGEKGSSS (437 aa)). A phosphoserine mark is found at Ser-340 and Ser-419. Disordered regions lie at residues 406-436 (EGES…GGKI) and 493-705 (GVVV…PPRK). Gly-433 is lipidated: N-myristoyl glycine. Positions 493-512 (GVVVSKGDDSVPPDSGVEPS) are enriched in low complexity. Ser-512 is subject to Phosphoserine. The segment covering 528–658 (QEKEDGLKEE…KQDDQKEEGA (131 aa)) has biased composition (basic and acidic residues). Repeat unit 1 spans residues 532 to 545 (DGLKEEGGPPEGKG). Residues 532–622 (DGLKEEGGPP…EEEGPLQKKE (91 aa)) are 7 X 14 AA tandem repeats. One copy of the 2; truncated repeat lies at 546–552 (EPPEGKG). 5 consecutive repeat copies span residues 553–566 (DSVK…EGKG), 567–580 (DGVK…EGKG), 581–594 (DGVK…EGKG), 595–608 (DGVK…EGKG), and 609–622 (EGLK…QKKE). Residues Thr-628 and Thr-674 each carry the phosphothreonine modification. Phosphoserine is present on residues Ser-701, Ser-754, and Ser-755.

This sequence belongs to the intermediate filament family. In terms of assembly, part of a complex required for lens intermediate filament formation composed of BFSP1, BFSP2 and CRYAA. Identified in a complex that contains VIM, EZR, AHNAK, BFSP1, BFSP2, ANK2, PLEC, PRX and spectrin. Found in a complex composed of PPL (via C-terminal linker domain), BFSP1 and BFSP2 in the retinal lens. Within the complex interacts with BFSP2. Interacts (via C-terminus) with MIP (via C-terminus) in aged lens fiber cells. In terms of processing, proteolytically cleaved during lens cell fiber differentiation with increased fragmentation as fiber cell age increases. Myristoylated at Gly-433 following proteolytic cleavage at Asp-432. Post-translationally, acetylated at Ala-41 following proteolytic cleavage at Leu-40. In terms of tissue distribution, abundantly expressed in both the inner and outer cortex of the retina, expressed at a lower level in the nucleus of the retina (at protein level). Detected in eye lens fiber cells (at protein level).

It localises to the cell membrane. The protein localises to the cytoplasm. Its subcellular location is the cytoskeleton. It is found in the cell cortex. Required for the correct formation of lens intermediate filaments as part of a complex composed of BFSP1, BFSP2 and CRYAA. Involved in altering the calcium regulation of MIP water permeability. The protein is Filensin (BFSP1) of Bos taurus (Bovine).